Consider the following 435-residue polypeptide: ATP-dependent protease ATPase subunit HslU (435 aa).

ATP-binding positions include Val18, Gly60–Glu65, Asp248, Glu313, and Arg385.

This sequence belongs to the ClpX chaperone family. HslU subfamily. As to quaternary structure, a double ring-shaped homohexamer of HslV is capped on each side by a ring-shaped HslU homohexamer. The assembly of the HslU/HslV complex is dependent on binding of ATP.

It is found in the cytoplasm. Functionally, ATPase subunit of a proteasome-like degradation complex; this subunit has chaperone activity. The binding of ATP and its subsequent hydrolysis by HslU are essential for unfolding of protein substrates subsequently hydrolyzed by HslV. HslU recognizes the N-terminal part of its protein substrates and unfolds these before they are guided to HslV for hydrolysis. The sequence is that of ATP-dependent protease ATPase subunit HslU from Xanthobacter autotrophicus (strain ATCC BAA-1158 / Py2).